Here is a 217-residue protein sequence, read N- to C-terminus: MAQAMASMTGLSQGVQLPAGPRRAGGRSRLAVVRADAAAADVQTGRRAVLGLVATGIAGGALAQAALAEAAKPIKLGPPPPPSGGLPGTLNSDQARDTDLPLRERFYLQPLPPAEAAARAKESAQDIINLKPLIEKKQWPFVRDDLRLRASYLRYDLKTVINSKPKDEKKGLKDLTGKLFATIDGLDHAAKIKSPEEAEKYYTLTKSALGDVLAKLG.

2 disordered regions span residues 1–25 (MAQA…RRAG) and 73–95 (PIKL…SDQA). A chloroplast-targeting transit peptide spans 1 to 63 (MAQAMASMTG…ATGIAGGALA (63 aa)).

This sequence belongs to the PsbQ family.

The protein localises to the plastid. The protein resides in the chloroplast thylakoid membrane. The protein is Oxygen-evolving enhancer protein 3, chloroplastic of Oryza sativa subsp. indica (Rice).